Reading from the N-terminus, the 246-residue chain is Zinc import ATP-binding protein ZnuC (246 aa).

The ABC transporter domain maps to 24 to 244 (LKIENLALAY…TLGEIFSSYI (221 aa)). Residue 56–63 (GPNGGGKT) participates in ATP binding.

Belongs to the ABC transporter superfamily. Zinc importer (TC 3.A.1.15.5) family. The complex is composed of two ATP-binding proteins (ZnuC), two transmembrane proteins (ZnuB) and a solute-binding protein (ZnuA).

It is found in the cell membrane. It catalyses the reaction Zn(2+)(out) + ATP(in) + H2O(in) = Zn(2+)(in) + ADP(in) + phosphate(in) + H(+)(in). In terms of biological role, part of the ABC transporter complex ZnuABC involved in zinc import. Responsible for energy coupling to the transport system. The chain is Zinc import ATP-binding protein ZnuC from Wolbachia sp. subsp. Brugia malayi (strain TRS).